The following is a 136-amino-acid chain: Group 1 truncated hemoglobin GlbN (136 aa).

A heme-binding site is contributed by His-81.

The protein belongs to the truncated hemoglobin family. Group I subfamily. In terms of assembly, homodimer. Heme is required as a cofactor.

Functionally, binds oxygen cooperatively with very high affinity because of a fast combination and a slow dissociation rate. The chain is Group 1 truncated hemoglobin GlbN (glbN) from Mycolicibacterium paratuberculosis (strain ATCC BAA-968 / K-10) (Mycobacterium paratuberculosis).